A 472-amino-acid chain; its full sequence is Clampless protein 1 (472 aa).

2 N-linked (GlcNAc...) asparagine glycosylation sites follow: N70 and N296.

Its function is as follows. Required for developmental progression after cells of opposite mating types fuse with one another, essential for processes common to both dikaryotic filament formation and monokaryotic fruiting. A direct target for transcription factors Sxi1-alpha and Sxi2-a. This is Clampless protein 1 from Cryptococcus neoformans var. neoformans serotype D (strain B-3501A) (Filobasidiella neoformans).